Consider the following 155-residue polypeptide: Endoribonuclease YbeY (155 aa).

Residues His113, His117, and His123 each coordinate Zn(2+).

This sequence belongs to the endoribonuclease YbeY family. Zn(2+) is required as a cofactor.

The protein resides in the cytoplasm. Single strand-specific metallo-endoribonuclease involved in late-stage 70S ribosome quality control and in maturation of the 3' terminus of the 16S rRNA. The chain is Endoribonuclease YbeY from Ureaplasma urealyticum serovar 10 (strain ATCC 33699 / Western).